A 304-amino-acid polypeptide reads, in one-letter code: Acetyl-coenzyme A carboxylase carboxyl transferase subunit beta (304 aa).

A CoA carboxyltransferase N-terminal domain is found at V23 to V292. C27, C30, C46, and C49 together coordinate Zn(2+). A C4-type zinc finger spans residues C27–C49. A disordered region spans residues N284–V304.

This sequence belongs to the AccD/PCCB family. In terms of assembly, acetyl-CoA carboxylase is a heterohexamer composed of biotin carboxyl carrier protein (AccB), biotin carboxylase (AccC) and two subunits each of ACCase subunit alpha (AccA) and ACCase subunit beta (AccD). It depends on Zn(2+) as a cofactor.

The protein localises to the cytoplasm. It catalyses the reaction N(6)-carboxybiotinyl-L-lysyl-[protein] + acetyl-CoA = N(6)-biotinyl-L-lysyl-[protein] + malonyl-CoA. It participates in lipid metabolism; malonyl-CoA biosynthesis; malonyl-CoA from acetyl-CoA: step 1/1. Component of the acetyl coenzyme A carboxylase (ACC) complex. Biotin carboxylase (BC) catalyzes the carboxylation of biotin on its carrier protein (BCCP) and then the CO(2) group is transferred by the transcarboxylase to acetyl-CoA to form malonyl-CoA. The chain is Acetyl-coenzyme A carboxylase carboxyl transferase subunit beta from Salmonella paratyphi A (strain ATCC 9150 / SARB42).